Consider the following 369-residue polypeptide: Gap junction alpha-5 protein (369 aa).

Over 2–19 (GDWSFLGEFLEEVHKHST) the chain is Cytoplasmic. The chain crosses the membrane as a helical span at residues 20-40 (VVGKVWLTVLFIFRMLVLGTA). Topologically, residues 41 to 76 (AGPLWGDEQSDFMCDTQQPGCENVCYDKAFPISHVR) are extracellular. Residues 77-97 (FWVLQIIFVSTPSLVYMGHAM) traverse the membrane as a helical segment. Topologically, residues 98 to 169 (HTVRMEEKRK…YSILIRTAME (72 aa)) are cytoplasmic. A helical membrane pass occupies residues 170–190 (IAFIVGQYILYGIFLETLYIC). Residues 191-210 (QRAPCPHPVNCYVSRPTEKN) are Extracellular-facing. A helical transmembrane segment spans residues 211 to 231 (VFIIFMLAVAVLSLFLSLAEL). Residues 232 to 369 (YHLGWKKAKE…SKARSDDLSV (138 aa)) lie on the Cytoplasmic side of the membrane. The interval 347–369 (NEKRRFSKASRASSKARSDDLSV) is disordered.

This sequence belongs to the connexin family. Alpha-type (group II) subfamily. As to quaternary structure, a connexon is composed of a hexamer of connexins. Mostly in heart, and in the whole embryo, liver, stomach, and pectoral muscle.

It is found in the cell membrane. It localises to the cell junction. The protein localises to the gap junction. Functionally, one gap junction consists of a cluster of closely packed pairs of transmembrane channels, the connexons, through which materials of low MW diffuse from one cell to a neighboring cell. The polypeptide is Gap junction alpha-5 protein (GJA5) (Gallus gallus (Chicken)).